Reading from the N-terminus, the 344-residue chain is Uroporphyrinogen decarboxylase (344 aa).

Residues 25–29 (RQAGR), Asp75, Tyr152, Ser207, and His323 contribute to the substrate site.

The protein belongs to the uroporphyrinogen decarboxylase family. Homodimer.

The protein resides in the cytoplasm. It catalyses the reaction uroporphyrinogen III + 4 H(+) = coproporphyrinogen III + 4 CO2. It functions in the pathway porphyrin-containing compound metabolism; protoporphyrin-IX biosynthesis; coproporphyrinogen-III from 5-aminolevulinate: step 4/4. Catalyzes the decarboxylation of four acetate groups of uroporphyrinogen-III to yield coproporphyrinogen-III. The sequence is that of Uroporphyrinogen decarboxylase from Ruegeria pomeroyi (strain ATCC 700808 / DSM 15171 / DSS-3) (Silicibacter pomeroyi).